The primary structure comprises 401 residues: Argininosuccinate synthase (401 aa).

ATP is bound by residues 11–19 and A38; that span reads AYSGGLDTS. The L-citrulline site is built by Y89 and S94. G119 is an ATP binding site. Residues T121, N125, and D126 each contribute to the L-aspartate site. N125 is an L-citrulline binding site. L-citrulline contacts are provided by R129, S180, S189, E265, and Y277.

The protein belongs to the argininosuccinate synthase family. Type 1 subfamily. As to quaternary structure, homotetramer.

It is found in the cytoplasm. The enzyme catalyses L-citrulline + L-aspartate + ATP = 2-(N(omega)-L-arginino)succinate + AMP + diphosphate + H(+). It functions in the pathway amino-acid biosynthesis; L-arginine biosynthesis; L-arginine from L-ornithine and carbamoyl phosphate: step 2/3. The chain is Argininosuccinate synthase from Syntrophus aciditrophicus (strain SB).